The primary structure comprises 290 residues: 33 kDa chaperonin (290 aa).

2 disulfide bridges follow: C231/C233 and C263/C266.

It belongs to the HSP33 family. In terms of processing, under oxidizing conditions two disulfide bonds are formed involving the reactive cysteines. Under reducing conditions zinc is bound to the reactive cysteines and the protein is inactive.

It localises to the cytoplasm. In terms of biological role, redox regulated molecular chaperone. Protects both thermally unfolding and oxidatively damaged proteins from irreversible aggregation. Plays an important role in the bacterial defense system toward oxidative stress. The chain is 33 kDa chaperonin from Thermotoga maritima (strain ATCC 43589 / DSM 3109 / JCM 10099 / NBRC 100826 / MSB8).